An 83-amino-acid chain; its full sequence is Putative snRNP Sm-like protein (83 aa).

The Sm domain occupies Lys-9–Asp-81.

It belongs to the snRNP Sm proteins family.

The chain is Putative snRNP Sm-like protein from Thermoplasma volcanium (strain ATCC 51530 / DSM 4299 / JCM 9571 / NBRC 15438 / GSS1).